Reading from the N-terminus, the 78-residue chain is Large ribosomal subunit protein bL28 (78 aa).

It belongs to the bacterial ribosomal protein bL28 family.

In Francisella tularensis subsp. holarctica (strain FTNF002-00 / FTA), this protein is Large ribosomal subunit protein bL28.